A 359-amino-acid polypeptide reads, in one-letter code: Dual-specificity RNA methyltransferase RlmN (359 aa).

Glu90 functions as the Proton acceptor in the catalytic mechanism. Residues 109–342 (HQERYTVCIS…CTIRESKGLD (234 aa)) enclose the Radical SAM core domain. A disulfide bridge connects residues Cys116 and Cys347. Positions 123, 127, and 130 each coordinate [4Fe-4S] cluster. Residues 173–174 (GE), Ser205, 228–230 (SLH), and Asn304 each bind S-adenosyl-L-methionine. The active-site S-methylcysteine intermediate is Cys347.

It belongs to the radical SAM superfamily. RlmN family. It depends on [4Fe-4S] cluster as a cofactor.

It is found in the cytoplasm. It carries out the reaction adenosine(2503) in 23S rRNA + 2 reduced [2Fe-2S]-[ferredoxin] + 2 S-adenosyl-L-methionine = 2-methyladenosine(2503) in 23S rRNA + 5'-deoxyadenosine + L-methionine + 2 oxidized [2Fe-2S]-[ferredoxin] + S-adenosyl-L-homocysteine. The enzyme catalyses adenosine(37) in tRNA + 2 reduced [2Fe-2S]-[ferredoxin] + 2 S-adenosyl-L-methionine = 2-methyladenosine(37) in tRNA + 5'-deoxyadenosine + L-methionine + 2 oxidized [2Fe-2S]-[ferredoxin] + S-adenosyl-L-homocysteine. In terms of biological role, specifically methylates position 2 of adenine 2503 in 23S rRNA and position 2 of adenine 37 in tRNAs. m2A2503 modification seems to play a crucial role in the proofreading step occurring at the peptidyl transferase center and thus would serve to optimize ribosomal fidelity. This is Dual-specificity RNA methyltransferase RlmN from Sulfurovum sp. (strain NBC37-1).